A 175-amino-acid chain; its full sequence is Putative carbonic anhydrase-like protein YbcF (175 aa).

It belongs to the beta-class carbonic anhydrase family.

The sequence is that of Putative carbonic anhydrase-like protein YbcF (ybcF) from Bacillus subtilis (strain 168).